The primary structure comprises 1220 residues: DNA-directed RNA polymerase subunit beta (1220 aa).

This sequence belongs to the RNA polymerase beta chain family. The RNAP catalytic core consists of 2 alpha, 1 beta, 1 beta' and 1 omega subunit. When a sigma factor is associated with the core the holoenzyme is formed, which can initiate transcription.

The enzyme catalyses RNA(n) + a ribonucleoside 5'-triphosphate = RNA(n+1) + diphosphate. Its function is as follows. DNA-dependent RNA polymerase catalyzes the transcription of DNA into RNA using the four ribonucleoside triphosphates as substrates. The sequence is that of DNA-directed RNA polymerase subunit beta from Mesomycoplasma hyopneumoniae (strain 232) (Mycoplasma hyopneumoniae).